We begin with the raw amino-acid sequence, 500 residues long: Cytochrome P450 CYP736A12 (500 aa).

A helical membrane pass occupies residues 4–24 (LAYPLLFVLLGALSWWILPII). Position 442 (Cys442) interacts with heme.

This sequence belongs to the cytochrome P450 family. The cofactor is heme.

Its subcellular location is the membrane. Probable heme-thiolate monooxygenase. The protein is Cytochrome P450 CYP736A12 of Panax ginseng (Korean ginseng).